The primary structure comprises 194 residues: MSFALGLTGSIGMGKSTTAAMFRDLDVPVWDADATVHKLYARGGAAVAPIDALVPGAMKDGAIDRAVLRAAIADDASLLKQIEAIVHPLVAKDRAMFRDIHSTAPLIILDIPLLFETGGDAACDATLVVTTSPEEQRRRVLARGTSEDTLHDLLSRQMPDAEKRARATYVIETDTLDGTRQDVAHLVSKLTEGT.

One can recognise a DPCK domain in the interval 4-194; sequence ALGLTGSIGM…HLVSKLTEGT (191 aa). ATP is bound at residue 12–17; sequence GMGKST.

This sequence belongs to the CoaE family.

Its subcellular location is the cytoplasm. It carries out the reaction 3'-dephospho-CoA + ATP = ADP + CoA + H(+). Its pathway is cofactor biosynthesis; coenzyme A biosynthesis; CoA from (R)-pantothenate: step 5/5. In terms of biological role, catalyzes the phosphorylation of the 3'-hydroxyl group of dephosphocoenzyme A to form coenzyme A. The protein is Dephospho-CoA kinase of Jannaschia sp. (strain CCS1).